Consider the following 630-residue polypeptide: tRNA uridine 5-carboxymethylaminomethyl modification enzyme MnmG (630 aa).

13–18 contacts FAD; that stretch reads GGGHAG. 273-287 provides a ligand contact to NAD(+); the sequence is GPRYCPSIEDKIHRF.

It belongs to the MnmG family. Homodimer. Heterotetramer of two MnmE and two MnmG subunits. It depends on FAD as a cofactor.

It localises to the cytoplasm. Its function is as follows. NAD-binding protein involved in the addition of a carboxymethylaminomethyl (cmnm) group at the wobble position (U34) of certain tRNAs, forming tRNA-cmnm(5)s(2)U34. The polypeptide is tRNA uridine 5-carboxymethylaminomethyl modification enzyme MnmG (Pseudomonas entomophila (strain L48)).